Reading from the N-terminus, the 231-residue chain is MRGKSAVLLSLIMLIAGFLISFSFQMTKENNKSAAETEEWKKEYALRDELLKQEKENKKFEKELYQKQNKVRQAENKLKKEKSEYYNVLEDTEKYRMYIGEVGVQGEGVEVTLEDASYIPEGENVNSYIVHESHIFQVVNELYISGAAAVAVNGQRLTHDSYIKCNGPVVTVDGVQHPAPFTVSAIGDPDVLLPSLNIAGGLIDQLSMDHISVSAEKEKNVQMKPILKTKE.

The N-terminal stretch at 1–34 (MRGKSAVLLSLIMLIAGFLISFSFQMTKENNKSA) is a signal peptide. Residues 44 to 94 (YALRDELLKQEKENKKFEKELYQKQNKVRQAENKLKKEKSEYYNVLEDTEK) are a coiled coil.

Belongs to the UPF0749 family.

Functionally, may be involved in cell division and sporulation. In Bacillus subtilis (strain 168), this protein is UPF0749 protein YlxW (ylxW).